A 415-amino-acid chain; its full sequence is Peptide chain release factor subunit 1 (415 aa).

It belongs to the eukaryotic release factor 1 family. As to quaternary structure, heterodimer of two subunits, one of which binds GTP.

It is found in the cytoplasm. Functionally, directs the termination of nascent peptide synthesis (translation) in response to the termination codons UAA, UAG and UGA. The protein is Peptide chain release factor subunit 1 of Thermococcus kodakarensis (strain ATCC BAA-918 / JCM 12380 / KOD1) (Pyrococcus kodakaraensis (strain KOD1)).